Reading from the N-terminus, the 194-residue chain is Probable GTP-binding protein EngB (194 aa).

Residues Gly-22–Met-194 enclose the EngB-type G domain. GTP-binding positions include Gly-30–Ser-37, Gly-57–Thr-61, Asp-75–Gly-78, Thr-142–Asp-145, and Phe-175–Ser-177. Mg(2+) contacts are provided by Ser-37 and Thr-59.

Belongs to the TRAFAC class TrmE-Era-EngA-EngB-Septin-like GTPase superfamily. EngB GTPase family. Mg(2+) serves as cofactor.

Functionally, necessary for normal cell division and for the maintenance of normal septation. The polypeptide is Probable GTP-binding protein EngB (Leuconostoc citreum (strain KM20)).